The sequence spans 219 residues: Uracil phosphoribosyltransferase 1 (219 aa).

Residues R33, R42, and 76–79 each bind GTP; that span reads DGRI. 5-phospho-alpha-D-ribose 1-diphosphate is bound at residue R86. R103 lines the GTP pocket. 5-phospho-alpha-D-ribose 1-diphosphate is bound at residue R111. GTP is bound at residue R132. 5-phospho-alpha-D-ribose 1-diphosphate contacts are provided by residues D138 and 138–146; that span reads DPMLATGGS. Y202 contributes to the D-ribose 5-phosphate binding site. Residues I203 and 208–210 each bind uracil; that span reads GDF. D209 serves as a coordination point for 5-phospho-alpha-D-ribose 1-diphosphate.

Belongs to the UPRTase family. Requires Mg(2+) as cofactor.

It catalyses the reaction UMP + diphosphate = 5-phospho-alpha-D-ribose 1-diphosphate + uracil. It participates in pyrimidine metabolism; UMP biosynthesis via salvage pathway; UMP from uracil: step 1/1. With respect to regulation, allosterically activated by GTP. Its function is as follows. Catalyzes the conversion of uracil and 5-phospho-alpha-D-ribose 1-diphosphate (PRPP) to UMP and diphosphate. This chain is Uracil phosphoribosyltransferase 1, found in Schizosaccharomyces pombe (strain 972 / ATCC 24843) (Fission yeast).